Consider the following 61-residue polypeptide: Small venom protein 1 (61 aa).

An N-terminal signal peptide occupies residues 1 to 20 (MRCVAIFLVVICAFVLQALA).

In terms of tissue distribution, expressed by the venom gland.

Its subcellular location is the secreted. This chain is Small venom protein 1, found in Pimpla hypochondriaca (Parasitoid wasp).